Consider the following 304-residue polypeptide: Putative AraC-like transcription regulator (304 aa).

Residues Ala202–His300 form the HTH araC/xylS-type domain. DNA-binding regions (H-T-H motif) lie at residues Ala219–Val240 and Leu267–Leu290.

The chain is Putative AraC-like transcription regulator from Streptomyces lividans.